Consider the following 217-residue polypeptide: Thymidylate kinase (217 aa).

7–14 (GIDGAGKS) provides a ligand contact to ATP.

This sequence belongs to the thymidylate kinase family.

The catalysed reaction is dTMP + ATP = dTDP + ADP. Phosphorylation of dTMP to form dTDP in both de novo and salvage pathways of dTTP synthesis. This Chlorobaculum parvum (strain DSM 263 / NCIMB 8327) (Chlorobium vibrioforme subsp. thiosulfatophilum) protein is Thymidylate kinase.